The chain runs to 60 residues: Large ribosomal subunit protein uL30 (60 aa).

Belongs to the universal ribosomal protein uL30 family. Part of the 50S ribosomal subunit.

The polypeptide is Large ribosomal subunit protein uL30 (Finegoldia magna (strain ATCC 29328 / DSM 20472 / WAL 2508) (Peptostreptococcus magnus)).